Here is a 671-residue protein sequence, read N- to C-terminus: UvrABC system protein C (671 aa).

Residues 1–20 (MPHLPDSMSPEAPAGPAPAT) are disordered. The segment covering 10–20 (PEAPAGPAPAT) has biased composition (low complexity). A GIY-YIG domain is found at 37-115 (PLPGVYRYFD…IKTLNPKYNI (79 aa)). A UVR domain is found at 232–267 (RQVMEALEARMMAHAEKLEFEQAAELRNQVAALSNV).

The protein belongs to the UvrC family. Interacts with UvrB in an incision complex.

It localises to the cytoplasm. In terms of biological role, the UvrABC repair system catalyzes the recognition and processing of DNA lesions. UvrC both incises the 5' and 3' sides of the lesion. The N-terminal half is responsible for the 3' incision and the C-terminal half is responsible for the 5' incision. This is UvrABC system protein C from Albidiferax ferrireducens (strain ATCC BAA-621 / DSM 15236 / T118) (Rhodoferax ferrireducens).